A 674-amino-acid polypeptide reads, in one-letter code: Dymeclin (674 aa).

The N-myristoyl glycine moiety is linked to residue G2.

Belongs to the dymeclin family. Interacts with GOLM1 and PPIB. In terms of processing, myristoylated in vitro; myristoylation is not essential for protein targeting to Golgi compartment.

The protein localises to the cytoplasm. It localises to the golgi apparatus. It is found in the membrane. Its function is as follows. Necessary for correct organization of Golgi apparatus. Involved in bone development. The polypeptide is Dymeclin (Dym) (Rattus norvegicus (Rat)).